The primary structure comprises 160 residues: Phosphopantetheine adenylyltransferase (160 aa).

A substrate-binding site is contributed by threonine 9. Residues 9–10 (TF) and histidine 17 contribute to the ATP site. Lysine 41, leucine 73, and arginine 87 together coordinate substrate. Residues 88–90 (GLR), glutamate 98, and 123–129 (YMFISAS) each bind ATP.

The protein belongs to the bacterial CoaD family. As to quaternary structure, homohexamer. Mg(2+) is required as a cofactor.

It is found in the cytoplasm. It catalyses the reaction (R)-4'-phosphopantetheine + ATP + H(+) = 3'-dephospho-CoA + diphosphate. Its pathway is cofactor biosynthesis; coenzyme A biosynthesis; CoA from (R)-pantothenate: step 4/5. In terms of biological role, reversibly transfers an adenylyl group from ATP to 4'-phosphopantetheine, yielding dephospho-CoA (dPCoA) and pyrophosphate. This chain is Phosphopantetheine adenylyltransferase, found in Thiobacillus denitrificans (strain ATCC 25259 / T1).